Here is a 443-residue protein sequence, read N- to C-terminus: tRNA modification GTPase MnmE (443 aa).

(6S)-5-formyl-5,6,7,8-tetrahydrofolate-binding residues include R19, E78, and K118. One can recognise a TrmE-type G domain in the interval 214-366 (GFKIAIIGPT…LISKIKNKLK (153 aa)). K(+) is bound at residue N224. GTP contacts are provided by residues 224-229 (NAGKSS), 243-249 (SEIAGTT), and 268-271 (DTAG). Residue S228 coordinates Mg(2+). Residues S243, I245, and T248 each contribute to the K(+) site. Residue T249 coordinates Mg(2+). Position 443 (K443) interacts with (6S)-5-formyl-5,6,7,8-tetrahydrofolate.

Belongs to the TRAFAC class TrmE-Era-EngA-EngB-Septin-like GTPase superfamily. TrmE GTPase family. As to quaternary structure, homodimer. Heterotetramer of two MnmE and two MnmG subunits. It depends on K(+) as a cofactor.

Its subcellular location is the cytoplasm. Exhibits a very high intrinsic GTPase hydrolysis rate. Involved in the addition of a carboxymethylaminomethyl (cmnm) group at the wobble position (U34) of certain tRNAs, forming tRNA-cmnm(5)s(2)U34. This chain is tRNA modification GTPase MnmE, found in Pelagibacter ubique (strain HTCC1062).